The sequence spans 221 residues: Iron-sulfur cluster repair protein YtfE (221 aa).

It belongs to the RIC family. YtfE subfamily. As to quaternary structure, homodimer.

Its subcellular location is the cytoplasm. Functionally, di-iron-containing protein involved in the repair of iron-sulfur clusters damaged by oxidative and nitrosative stress conditions. The sequence is that of Iron-sulfur cluster repair protein YtfE from Yersinia pestis bv. Antiqua (strain Antiqua).